Reading from the N-terminus, the 647-residue chain is Threonine--tRNA ligase (647 aa).

One can recognise a TGS domain in the interval 1 to 61 (MINITFPDGA…TEDGSIEIVT (61 aa)). The segment at 242 to 540 (DHRKLGKELD…LIENYKGAFP (299 aa)) is catalytic. Cys336, His387, and His517 together coordinate Zn(2+).

The protein belongs to the class-II aminoacyl-tRNA synthetase family. As to quaternary structure, homodimer. Zn(2+) serves as cofactor.

The protein localises to the cytoplasm. The catalysed reaction is tRNA(Thr) + L-threonine + ATP = L-threonyl-tRNA(Thr) + AMP + diphosphate + H(+). Its function is as follows. Catalyzes the attachment of threonine to tRNA(Thr) in a two-step reaction: L-threonine is first activated by ATP to form Thr-AMP and then transferred to the acceptor end of tRNA(Thr). Also edits incorrectly charged L-seryl-tRNA(Thr). The polypeptide is Threonine--tRNA ligase (Streptococcus pneumoniae (strain JJA)).